The sequence spans 309 residues: Taste receptor type 2 member 64 (309 aa).

The Extracellular segment spans residues 1-3 (MVY). The chain crosses the membrane as a helical span at residues 4–26 (FLLIILSILVVFAFVLGNFSNGF). The Cytoplasmic segment spans residues 27–46 (VALVNVIDWVKTRKISSADQ). A helical membrane pass occupies residues 47–69 (ILTALVVSRIGLLWVILFHWYAN). The Extracellular portion of the chain corresponds to 70 to 83 (VFNSALYSSEVGAV). Residues 84–106 (ASNISAIINHFSIWLAASLGIFY) traverse the membrane as a helical segment. Over 107 to 126 (LLKIANFSNLIFLHLKKRIR) the chain is Cytoplasmic. A helical transmembrane segment spans residues 127 to 149 (SVVLVILLGPLVFLICNLAVITM). Residues 150-176 (DERVWTKEYEGNVTWKIKLRNAIHLSD) are Extracellular-facing. Asparagine 161 is a glycosylation site (N-linked (GlcNAc...) asparagine). Residues 177 to 199 (LTVSTLANLIPFILTLICFLLLI) form a helical membrane-spanning segment. The Cytoplasmic portion of the chain corresponds to 200-230 (CSLHKHLKKMQLHGKGSQDLSTKVHIKALQT). A helical transmembrane segment spans residues 231 to 253 (VISFLMLYAIYFLYLITLTWNLW). Residues 254–258 (TQQNK) lie on the Extracellular side of the membrane. Residues 259–281 (LVFLLCQTLGIMYPSFHSFFLIM) traverse the membrane as a helical segment. Residues 282 to 309 (GSRKLKQTFLSVLCQVTCLVKGQQPSTP) are Cytoplasmic-facing.

This sequence belongs to the G-protein coupled receptor T2R family.

Its subcellular location is the membrane. In terms of biological role, receptor that may play a role in the perception of bitterness and is gustducin-linked. May play a role in sensing the chemical composition of the gastrointestinal content. The activity of this receptor may stimulate alpha gustducin, mediate PLC-beta-2 activation and lead to the gating of TRPM5. The sequence is that of Taste receptor type 2 member 64 (TAS2R64) from Pan paniscus (Pygmy chimpanzee).